The primary structure comprises 108 residues: Thiosulfate sulfurtransferase GlpE (108 aa).

In terms of domain architecture, Rhodanese spans 17-105; it reads QEKEAVLVDI…WQRQFPAEVA (89 aa). The active-site Cysteine persulfide intermediate is the Cys65.

The protein belongs to the GlpE family.

The protein resides in the cytoplasm. The catalysed reaction is thiosulfate + hydrogen cyanide = thiocyanate + sulfite + 2 H(+). It catalyses the reaction thiosulfate + [thioredoxin]-dithiol = [thioredoxin]-disulfide + hydrogen sulfide + sulfite + 2 H(+). Its function is as follows. Transferase that catalyzes the transfer of sulfur from thiosulfate to thiophilic acceptors such as cyanide or dithiols. May function in a CysM-independent thiosulfate assimilation pathway by catalyzing the conversion of thiosulfate to sulfite, which can then be used for L-cysteine biosynthesis. This Escherichia coli O139:H28 (strain E24377A / ETEC) protein is Thiosulfate sulfurtransferase GlpE.